Here is a 1105-residue protein sequence, read N- to C-terminus: Ran-binding protein 6 (1105 aa).

At Ala-2 the chain carries N-acetylalanine. 4 HEAT repeats span residues 219 to 257 (FKDF…TVPK), 361 to 399 (KVVL…GCHQ), 402 to 440 (ESIL…DFAP), and 444 to 483 (KKFH…DCPK). The ran-GTP binding stretch occupies residues 333–383 (DEMEEDDFDSNAVAAESALDRLACGLGGKVVLPMTKEHIMQMLQSPDWKYR). Residues 806–842 (KAKLEGHFKNQELRQVKRQEENYDQQVEMSLQDEDEC) are a coiled coil. 3 HEAT repeats span residues 866–905 (LPWF…HCSP), 908–946 (FKYV…FGGD), and 949–987 (RSLC…IGKI).

It belongs to the importin beta family.

It is found in the cytoplasm. The protein localises to the nucleus. May function in nuclear protein import as nuclear transport receptor. In Homo sapiens (Human), this protein is Ran-binding protein 6 (RANBP6).